Here is a 124-residue protein sequence, read N- to C-terminus: KETAAAKFERQHIDSNPSSVSSSNYCNQMMKSRNLTQGRCKPVNTFVHESLADVQAVCSQKNVACKNGQTNCYQSYSTMSITDCRETGSSKYPNCAYKTTQAKKHIIVACEGNPYVPVHYDASV.

A compositionally biased stretch (basic and acidic residues) spans 1–13 (KETAAAKFERQHI). A disordered region spans residues 1 to 24 (KETAAAKFERQHIDSNPSSVSSSN). Residues Lys7 and Arg10 each coordinate substrate. The active-site Proton acceptor is the His12. Low complexity predominate over residues 15–24 (SNPSSVSSSN). Cystine bridges form between Cys26/Cys84, Cys40/Cys95, Cys58/Cys110, and Cys65/Cys72. The N-linked (GlcNAc...) asparagine; partial glycan is linked to Asn34. Substrate-binding positions include 41 to 45 (KPVNT), Lys66, and Arg85. The active-site Proton donor is the His119.

This sequence belongs to the pancreatic ribonuclease family. In terms of assembly, monomer. Interacts with and forms tight 1:1 complexes with RNH1. Dimerization of two such complexes may occur. Interaction with RNH1 inhibits this protein. Pancreas.

The protein localises to the secreted. The catalysed reaction is an [RNA] containing cytidine + H2O = an [RNA]-3'-cytidine-3'-phosphate + a 5'-hydroxy-ribonucleotide-3'-[RNA].. It carries out the reaction an [RNA] containing uridine + H2O = an [RNA]-3'-uridine-3'-phosphate + a 5'-hydroxy-ribonucleotide-3'-[RNA].. Its function is as follows. Endonuclease that catalyzes the cleavage of RNA on the 3' side of pyrimidine nucleotides. Acts on single-stranded and double-stranded RNA. The polypeptide is Ribonuclease pancreatic (RNASE1) (Antilocapra americana (Pronghorn)).